The chain runs to 267 residues: Large ribosomal subunit protein bL9m (267 aa).

A mitochondrion-targeting transit peptide spans 1-52 (MAAPVVTAPGRALLRAGAGRLLRGGVQELLRPRHEGNAPDLACNFSLSQNRG).

Belongs to the bacterial ribosomal protein bL9 family. In terms of assembly, component of the mitochondrial large ribosomal subunit (mt-LSU). Mature mammalian 55S mitochondrial ribosomes consist of a small (28S) and a large (39S) subunit. The 28S small subunit contains a 12S ribosomal RNA (12S mt-rRNA) and 30 different proteins. The 39S large subunit contains a 16S rRNA (16S mt-rRNA), a copy of mitochondrial valine transfer RNA (mt-tRNA(Val)), which plays an integral structural role, and 52 different proteins.

Its subcellular location is the mitochondrion. The protein is Large ribosomal subunit protein bL9m (MRPL9) of Homo sapiens (Human).